A 529-amino-acid polypeptide reads, in one-letter code: GTPase Obg (529 aa).

Residues 2-159 (ASFVDRVVLH…SDIVLELKSI (158 aa)) form the Obg domain. One can recognise an OBG-type G domain in the interval 160-343 (ADIALVGFPS…LGFAMAEIVK (184 aa)). GTP is bound by residues 166–173 (GFPSAGKS), 191–195 (FTTLI), 212–215 (DVPG), 295–298 (NKVD), and 324–326 (SAT). Mg(2+) contacts are provided by serine 173 and threonine 193. The 85-residue stretch at 363 to 447 (PRAVNETGFR…DDGVVFDWEP (85 aa)) folds into the OCT domain. The tract at residues 461 to 529 (GTDIRFADTG…ESGLDSGDES (69 aa)) is disordered. The segment covering 462 to 502 (TDIRFADTGDRPTRSQKREEQQERRDAKAAARAELEAERKA) has biased composition (basic and acidic residues).

It belongs to the TRAFAC class OBG-HflX-like GTPase superfamily. OBG GTPase family. As to quaternary structure, monomer. It depends on Mg(2+) as a cofactor.

It is found in the cytoplasm. An essential GTPase which binds GTP, GDP and possibly (p)ppGpp with moderate affinity, with high nucleotide exchange rates and a fairly low GTP hydrolysis rate. Plays a role in control of the cell cycle, stress response, ribosome biogenesis and in those bacteria that undergo differentiation, in morphogenesis control. The sequence is that of GTPase Obg from Pseudarthrobacter chlorophenolicus (strain ATCC 700700 / DSM 12829 / CIP 107037 / JCM 12360 / KCTC 9906 / NCIMB 13794 / A6) (Arthrobacter chlorophenolicus).